The chain runs to 878 residues: Lon protease 2 (878 aa).

Residues 85–281 enclose the Lon N-terminal domain; sequence LYLLPVKERP…KVLSLFKHEI (197 aa). An ATP-binding site is contributed by 434 to 441; it reads GPPGVGKT. A Lon proteolytic domain is found at 668–850; that stretch reads NQQMGTVTGL…DDVAKLTFHI (183 aa). Residues serine 756 and lysine 799 contribute to the active site.

It belongs to the peptidase S16 family. In terms of assembly, homohexamer. Organized in a ring with a central cavity.

It localises to the cytoplasm. It catalyses the reaction Hydrolysis of proteins in presence of ATP.. In terms of biological role, ATP-dependent serine protease that mediates the selective degradation of mutant and abnormal proteins as well as certain short-lived regulatory proteins. Required for cellular homeostasis and for survival from DNA damage and developmental changes induced by stress. Degrades polypeptides processively to yield small peptide fragments that are 5 to 10 amino acids long. Binds to DNA in a double-stranded, site-specific manner. The polypeptide is Lon protease 2 (Hydrogenovibrio crunogenus (strain DSM 25203 / XCL-2) (Thiomicrospira crunogena)).